We begin with the raw amino-acid sequence, 145 residues long: MLRTMFHAKIHRATVTQADLHYVGSVTVDQDLLDAADILPGELVSIVDVTNGARLETYTIAGERGSGVLGINGAAAHLVHPGDIVILIAYGQMDDDEARHFQPKVVHVDADNRIVELGIDPADGLLDGLSRPPLSREWNEAQAEL.

Catalysis depends on S25, which acts as the Schiff-base intermediate with substrate; via pyruvic acid. Pyruvic acid (Ser) is present on S25. T57 provides a ligand contact to substrate. Catalysis depends on Y58, which acts as the Proton donor. Substrate is bound at residue 73-75 (GAA).

The protein belongs to the PanD family. In terms of assembly, heterooctamer of four alpha and four beta subunits. Pyruvate serves as cofactor. Is synthesized initially as an inactive proenzyme, which is activated by self-cleavage at a specific serine bond to produce a beta-subunit with a hydroxyl group at its C-terminus and an alpha-subunit with a pyruvoyl group at its N-terminus.

It is found in the cytoplasm. It carries out the reaction L-aspartate + H(+) = beta-alanine + CO2. The protein operates within cofactor biosynthesis; (R)-pantothenate biosynthesis; beta-alanine from L-aspartate: step 1/1. Functionally, catalyzes the pyruvoyl-dependent decarboxylation of aspartate to produce beta-alanine. In Micrococcus luteus (strain ATCC 4698 / DSM 20030 / JCM 1464 / CCM 169 / CCUG 5858 / IAM 1056 / NBRC 3333 / NCIMB 9278 / NCTC 2665 / VKM Ac-2230) (Micrococcus lysodeikticus), this protein is Aspartate 1-decarboxylase.